The sequence spans 396 residues: Putative glycosyltransferase HOC1 (396 aa).

At 2–13 (AKTTKRASSFRR) the chain is on the cytoplasmic side. A helical; Signal-anchor for type II membrane protein membrane pass occupies residues 14–34 (LMIFAIIALISLAFGVRYLFH). The Lumenal portion of the chain corresponds to 35 to 396 (NSNATDLQKI…WKNTPKVEQK (362 aa)). N-linked (GlcNAc...) asparagine glycosylation occurs at N37.

It belongs to the glycosyltransferase 32 family. Component of the M-Pol II complex composed of ANP1, MNN9, MNN10, MNN11 and HOC1.

It localises to the golgi apparatus. The protein resides in the cis-Golgi network membrane. Functionally, the M-Pol II complex possesses alpha-1,6-mannosyltransferase activity and is probably involved in the elongation of the mannan backbone of N-linked glycans on cell wall and periplasmic proteins. In Saccharomyces cerevisiae (strain ATCC 204508 / S288c) (Baker's yeast), this protein is Putative glycosyltransferase HOC1 (HOC1).